Here is a 388-residue protein sequence, read N- to C-terminus: 3-oxo-Delta(4,5)-steroid 5-beta-reductase (388 aa).

Ser2 bears the N-acetylserine mark. NADP(+) contacts are provided by residues 35-37 (TGI), 63-64 (RR), 81-82 (DV), Thr105, and Gln143. Residues Lys147 and Tyr178 contribute to the active site. Residues Tyr178, Ile205, and 212-214 (SLM) each bind NADP(+).

It belongs to the short-chain dehydrogenases/reductases (SDR) family. Highly divergent. Homodimer. Expressed in roots, stems, leaves, flowers, seeds and siliques. Expressed in the vascular bundles.

The catalysed reaction is 5beta-cholestan-3-one + NADP(+) = cholest-4-en-3-one + NADPH + H(+). The enzyme catalyses 4,5beta-dihydrocortisone + NADP(+) = cortisone + NADPH + H(+). Its function is as follows. Involved in vascular strand development. Catalyzes the stereospecific conversion of progesterone to 5-beta-pregnane-3,20-dione. Can use progesterone, testosterone, 21-acetyl cortexone, 2-cyclohexenone, but-1-en-3-one, ethyl acrylate, ethylmethacrylate, cortisone and canarigenone as substrates, lower activity with 3-methyl-2-cyclohexenone and 3,5,5-trimethyl-2-cyclohexenone as substrate, and no activity with canarigenin, canarigenin digitoxoside and pregnenolone. May be involved in the formation of 5-beta phytoecdysteroids. In Arabidopsis thaliana (Mouse-ear cress), this protein is 3-oxo-Delta(4,5)-steroid 5-beta-reductase (VEP1).